The following is a 429-amino-acid chain: Inner membrane transport protein RhmT (429 aa).

At 1 to 16 (MSTALLDAVVKKNRVR) the chain is on the cytoplasmic side. The chain crosses the membrane as a helical span at residues 17–37 (LIPFMLALYVLAFLDRSNIGF). Topologically, residues 38–54 (AKQTYQIDTGLSNEAYA) are periplasmic. A helical transmembrane segment spans residues 55–75 (LGAGIFFVVYAFLGVPANLLM). Over 76–81 (RKLGAR) the chain is Cytoplasmic. A helical transmembrane segment spans residues 82–102 (TWIGTTTLLWGFLSAAMAWAD). Over 103–143 (TEAKFLIVRTLLRAAEAGFFPGMIYLTSQWFPQRNRASIMG) the chain is Periplasmic. A helical membrane pass occupies residues 144–164 (LFYMGAPLALTLGSPLSGALL). Topologically, residues 165–174 (EMHGFMGHPG) are cytoplasmic. Residues 175-195 (WFWMFVIEGLLAVGAGVFTFF) form a helical membrane-spanning segment. The Periplasmic portion of the chain corresponds to 196–242 (WLDDTPEQARFLSKQEKTLLINQLASEEQQKVTSRLSDALRNGRVWQ). A helical transmembrane segment spans residues 243 to 263 (LAIIYLTIQVAVYGLIFFLPT). Topologically, residues 264–274 (QVAALLGTKVG) are cytoplasmic. The helical transmembrane segment at 275-295 (FTASVVTAIPWVAALFGTWLI) threads the bilayer. Over 296–324 (PRYSDKTGERRNVAALTLLAAGIGIGLSG) the chain is Periplasmic. The helical transmembrane segment at 325–345 (LLSPVMAIVALCVAAIGFIAV) threads the bilayer. At 346–361 (QPVFWTMPTQLLSGTA) the chain is on the cytoplasmic side. The chain crosses the membrane as a helical span at residues 362 to 382 (LAAGIGFVNLFGAVGGFIAPI). At 383 to 394 (LRVKAETLFASD) the chain is on the periplasmic side. A helical membrane pass occupies residues 395 to 415 (AAGLLTLAAVAVIGSLIIFTL). The Cytoplasmic portion of the chain corresponds to 416–429 (RVNRTVAQTDVAHH).

It belongs to the major facilitator superfamily. Phthalate permease family.

Its subcellular location is the cell inner membrane. This Escherichia coli (strain K12) protein is Inner membrane transport protein RhmT (rhmT).